Consider the following 308-residue polypeptide: Protease HtpX homolog (308 aa).

2 helical membrane-spanning segments follow: residues 16-36 and 39-59; these read LLSLLVGLGIAALASLIIYAV and YLFGIYSIGIIFGVFVLVLMM. Residue histidine 149 participates in Zn(2+) binding. Glutamate 150 is an active-site residue. Histidine 153 serves as a coordination point for Zn(2+). The next 2 membrane-spanning stretches (helical) occupy residues 161–181 and 192–212; these read VIMAIGLIPTLIFYFAYTTLF and IILALVLMVVSFLFNIMVLSV. Position 217 (glutamate 217) interacts with Zn(2+).

Belongs to the peptidase M48B family. The cofactor is Zn(2+).

It localises to the cell membrane. This Thermoplasma volcanium (strain ATCC 51530 / DSM 4299 / JCM 9571 / NBRC 15438 / GSS1) protein is Protease HtpX homolog.